A 619-amino-acid chain; its full sequence is MFVRSNILRALIFTVLEKTCLEIKMMHSSCKGLVLLLFLFVVVFIGNTDANAQWEVSHKVRASPHENMGRNVIDGSGVEKTLHDIGMGEKRGTHNKVSVSTVALFTLAMAAATGLGAVPFFFVELDPQWAGICNGMAAGVMLAASFDLVKEGQEHGSGNWVVTGILAGALFIWLCKQILEQYGEVSMLDIKGADATKVVLVIGIMTLHSFGEGSGVGVSFAGSKGFSQGLLVTLAIAVHNIPEGLAVSMVLASRGVSPQNAMLWSIITSLPQPLVAVPAFLCADAFSKFLPFCTGFAAGCMIWMVIAEVLPDAFKEASPSQVASAATISVASMEALSTLFESFTHDYNSEDASGFFVSLLFGLGPLLGGVFLVASAVTFRLQHALLMGVASGIAFVLGLWRPLQLLLSAKMGLIPLVSLLAIGAGLSHFTSSTILNVTGRKKSRAGSLINPVTNFPTSVITLQSLLACGAVGFHALAEGLALGVAAPNAYGLGRHMVLPVSLHGLPRGTAVASCVFGATDSWHAALAAAALIGFVGPISAIGSILAGIDYSGLDHVMVVACGGLLPSFWQVIKRAVRLERRKGSVGMVLGLACAVVCLTFTRLVCLHTPYCNSAPEAVR.

Helical transmembrane passes span 25–45, 102–122, 129–149, 155–175, 198–218, 230–250, 261–281, 289–309, 354–374, 383–403, 405–425, 465–485, 528–548, 552–572, and 585–605; these read MMHS…VVFI, VALF…PFFF, WAGI…FDLV, HGSG…IWLC, VVLV…GVGV, LLVT…VSMV, AMLW…PAFL, FLPF…IAEV, GFFV…FLVA, HALL…WRPL, LLLS…IGAG, LLAC…LGVA, AAAL…LAGI, GLDH…WQVI, and VGMV…RLVC.

This sequence belongs to the ZIP transporter (TC 2.A.5) family. ZupT subfamily.

It localises to the membrane. Its function is as follows. May transport zinc. The sequence is that of Putative zinc transporter At3g08650 from Arabidopsis thaliana (Mouse-ear cress).